Reading from the N-terminus, the 935-residue chain is C-1-tetrahydrofolate synthase, cytoplasmic (935 aa).

Residue M1 is modified to N-acetylmethionine. Positions 2–291 (APAGILNGKL…MLMQSTVESA (290 aa)) are methylenetetrahydrofolate dehydrogenase and methenyltetrahydrofolate cyclohydrolase (D/C) domain. Residues 52–56 (YINVK) and 99–101 (VQL) each bind substrate. K56 is an active-site residue. NADP(+)-binding positions include 172-174 (GRS) and S197. A substrate-binding site is contributed by 272–276 (PGGVG). The segment at 310–935 (LNLKTPVPSD…PETEQVNGLF (626 aa)) is formyltetrahydrofolate synthetase domain. Phosphoserine is present on S318. ATP is bound at residue 380 to 387 (TPLGEGKS). Phosphoserine is present on residues S413 and S490.

In the N-terminal section; belongs to the tetrahydrofolate dehydrogenase/cyclohydrolase family. This sequence in the C-terminal section; belongs to the formate--tetrahydrofolate ligase family. Homodimer.

It is found in the cytoplasm. The enzyme catalyses (6R)-5,10-methylene-5,6,7,8-tetrahydrofolate + NADP(+) = (6R)-5,10-methenyltetrahydrofolate + NADPH. It catalyses the reaction (6R)-5,10-methenyltetrahydrofolate + H2O = (6R)-10-formyltetrahydrofolate + H(+). The catalysed reaction is (6S)-5,6,7,8-tetrahydrofolate + formate + ATP = (6R)-10-formyltetrahydrofolate + ADP + phosphate. It functions in the pathway one-carbon metabolism; tetrahydrofolate interconversion. In terms of biological role, trifunctional enzyme that catalyzes the interconversion of three forms of one-carbon-substituted tetrahydrofolate: (6R)-5,10-methylene-5,6,7,8-tetrahydrofolate, 5,10-methenyltetrahydrofolate and (6S)-10-formyltetrahydrofolate. These derivatives of tetrahydrofolate are differentially required in nucleotide and amino acid biosynthesis, (6S)-10-formyltetrahydrofolate being required for purine biosynthesis while (6R)-5,10-methylene-5,6,7,8-tetrahydrofolate is used for serine and methionine biosynthesis for instance. The polypeptide is C-1-tetrahydrofolate synthase, cytoplasmic (Mthfd1) (Mus musculus (Mouse)).